The following is a 256-amino-acid chain: Small ribosomal subunit protein eS1 (256 aa).

Residues 1–18 show a composition bias toward basic residues; that stretch reads MAVGKNKRLSKGKKGLKK. A disordered region spans residues 1 to 22; the sequence is MAVGKNKRLSKGKKGLKKKTQD. Alanine 2 is subject to N-acetylalanine; partial.

The protein belongs to the eukaryotic ribosomal protein eS1 family. Component of the small ribosomal subunit. Mature ribosomes consist of a small (40S) and a large (60S) subunit. The 40S subunit contains about 33 different proteins and 1 molecule of RNA (18S). The 60S subunit contains about 49 different proteins and 3 molecules of RNA (25S, 5.8S and 5S).

The protein resides in the cytoplasm. In Pyricularia oryzae (strain Y34) (Rice blast fungus), this protein is Small ribosomal subunit protein eS1.